The following is a 315-amino-acid chain: Cysteine proteinase 2 (315 aa).

The first 13 residues, 1–13, serve as a signal peptide directing secretion; sequence MFAFICLLAIASA. Positions 14–93 are cleaved as a propeptide — activation peptide; that stretch reads IDFNTWASKN…NGQVKYLNIQ (80 aa). 2 cysteine pairs are disulfide-bonded: cysteine 115-cysteine 161 and cysteine 152-cysteine 193. Residue cysteine 118 is part of the active site. Active-site residues include histidine 259 and asparagine 279.

Belongs to the peptidase C1 family. As to quaternary structure, interacts with cysteine protease inhibitor ICP1. Interacts with cysteine protease inhibitor ICP2.

It localises to the cell membrane. The protein localises to the cytoplasmic vesicle. It is found in the phagosome. The protein resides in the secreted. It carries out the reaction Hydrolysis of proteins, including basement membrane collagen and azocasein. Preferential cleavage: Arg-Arg-|-Xaa in small molecule substrates including Z-Arg-Arg-|-NHMec.. Its activity is regulated as follows. Inhibited by cysteine protease inhibitors ICP1 and ICP2. Inhibited by leupeptin and such inhibitors of cysteine proteinases as L-transepoxysuccinyl-L-leucylamido-(4-guanidino)butane, peptidyldiazomethanes, iodoacetic acid and chicken cystatin. In terms of biological role, cysteine protease which degrades matrix proteins such as collagen, laminin and fibronectin and thus is involved in the destruction of human tissue. Can abolish adhesion. May play an important role in pathogenicity. In Entamoeba histolytica (strain ATCC 30459 / HM-1:IMSS / ABRM), this protein is Cysteine proteinase 2.